Consider the following 157-residue polypeptide: Transcription elongation factor GreA (157 aa).

Residues 47 to 75 (SGEYEDAKKAQALLEGRIRELKHLLSRAE) are a coiled coil.

It belongs to the GreA/GreB family.

Its function is as follows. Necessary for efficient RNA polymerase transcription elongation past template-encoded arresting sites. The arresting sites in DNA have the property of trapping a certain fraction of elongating RNA polymerases that pass through, resulting in locked ternary complexes. Cleavage of the nascent transcript by cleavage factors such as GreA or GreB allows the resumption of elongation from the new 3'terminus. GreA releases sequences of 2 to 3 nucleotides. The protein is Transcription elongation factor GreA of Chloroflexus aurantiacus (strain ATCC 29366 / DSM 635 / J-10-fl).